A 121-amino-acid polypeptide reads, in one-letter code: Large ribosomal subunit protein bL12 (121 aa).

This sequence belongs to the bacterial ribosomal protein bL12 family. In terms of assembly, homodimer. Part of the ribosomal stalk of the 50S ribosomal subunit. Forms a multimeric L10(L12)X complex, where L10 forms an elongated spine to which 2 to 4 L12 dimers bind in a sequential fashion. Binds GTP-bound translation factors.

Forms part of the ribosomal stalk which helps the ribosome interact with GTP-bound translation factors. Is thus essential for accurate translation. This Escherichia coli O45:K1 (strain S88 / ExPEC) protein is Large ribosomal subunit protein bL12.